A 132-amino-acid polypeptide reads, in one-letter code: D-ribose pyranase (132 aa).

The active-site Proton donor is the H20. Residues D28, H99, and 121 to 123 each bind substrate; that span reads YAN.

This sequence belongs to the RbsD / FucU family. RbsD subfamily. In terms of assembly, homodecamer.

It is found in the cytoplasm. It carries out the reaction beta-D-ribopyranose = beta-D-ribofuranose. It functions in the pathway carbohydrate metabolism; D-ribose degradation; D-ribose 5-phosphate from beta-D-ribopyranose: step 1/2. Its function is as follows. Catalyzes the interconversion of beta-pyran and beta-furan forms of D-ribose. This is D-ribose pyranase from Variovorax paradoxus (strain S110).